A 403-amino-acid chain; its full sequence is Argininosuccinate synthase (403 aa).

ATP-binding positions include 10–18 and Ala-37; that span reads AYSGGLDTS. L-citrulline is bound at residue Tyr-89. Gly-119 lines the ATP pocket. Residues Thr-121, Asn-125, and Asp-126 each coordinate L-aspartate. Asn-125 serves as a coordination point for L-citrulline. L-citrulline-binding residues include Arg-129, Ser-178, Ser-187, Glu-263, and Tyr-275.

It belongs to the argininosuccinate synthase family. Type 1 subfamily. In terms of assembly, homotetramer.

The protein resides in the cytoplasm. The catalysed reaction is L-citrulline + L-aspartate + ATP = 2-(N(omega)-L-arginino)succinate + AMP + diphosphate + H(+). The protein operates within amino-acid biosynthesis; L-arginine biosynthesis; L-arginine from L-ornithine and carbamoyl phosphate: step 2/3. In Idiomarina loihiensis (strain ATCC BAA-735 / DSM 15497 / L2-TR), this protein is Argininosuccinate synthase.